Consider the following 499-residue polypeptide: Sensor histidine kinase VxrA (499 aa).

Over 1–12 (MRYSFCMLEKTN) the chain is Cytoplasmic. Residues 13–31 (IPLIRALNLTLVSLCFAML) traverse the membrane as a helical segment. Residues 32–257 (PNPVHADSLP…ICWDVEDHSD (226 aa)) lie on the Periplasmic side of the membrane. 2 disulfide bridges follow: Cys-101/Cys-122 and Cys-241/Cys-249. A helical membrane pass occupies residues 258–280 (LLRTSMIILVIANIFLVLGWSGY). The Cytoplasmic segment spans residues 281-499 (RWNSKRQEMR…IPCETDTASR (219 aa)). The Histidine kinase domain maps to 298–494 (ILTHELRTPI…TFILEIPCET (197 aa)). Phosphohistidine; by autocatalysis is present on His-301.

Homodimer. Post-translationally, autophosphorylated. Contains two disulfide bonds that may play a role in the stability of the protein. However, the disulfide bonds are not absolutely essential, as some activity and growth are detected in the absence of each disulfide bond.

Its subcellular location is the cell inner membrane. The enzyme catalyses ATP + protein L-histidine = ADP + protein N-phospho-L-histidine.. Member of the two-component regulatory system VxrB/VxrA involved in the regulation of diverses processes, including virulence, the type VI secretion system (T6SS) and biofilm formation. Functions as a sensor protein kinase which is autophosphorylated at a histidine residue and transfers its phosphate group to the conserved aspartic acid residue in the regulatory domain of VxrB. Is critical for colonization in the infant mouse model. Contributes to the resistance to beta-lactam treatment. The chain is Sensor histidine kinase VxrA from Vibrio cholerae serotype O1 (strain ATCC 39315 / El Tor Inaba N16961).